A 795-amino-acid chain; its full sequence is TBC1 domain family member 5 (795 aa).

Residues 1–13 are compositionally biased toward basic and acidic residues; that stretch reads MYHSLSETRHPLQ. The disordered stretch occupies residues 1 to 49; that stretch reads MYHSLSETRHPLQPEEQEVGIDPLSSYSNKSGGDSNKNGRRTSSTLDSE. Residues 25 to 49 are compositionally biased toward polar residues; it reads SSYSNKSGGDSNKNGRRTSSTLDSE. Threonine 42 is subject to Phosphothreonine. Serine 43 and serine 44 each carry phosphoserine. Positions 56 to 64 are required for interaction with retromer; involved in interaction with ATG8 family proteins; that stretch reads RKEWEELFV. Positions 57–62 match the LIR 1 motif; that stretch reads KEWEEL. One can recognise a Rab-GAP TBC domain in the interval 81–359; it reads LRSSRFRSIC…VVWDALFADG (279 aa). Residue serine 460 is modified to Phosphoserine. Residues 475–564 are disordered; that stretch reads PGSAGGPVPG…PPSSATKKDS (90 aa). Over residues 484–496 the composition is skewed to low complexity; sequence GGNSSSSSSVVIP. Phosphoserine occurs at positions 522, 539, 541, 544, 554, 570, 584, and 730. A compositionally biased stretch (polar residues) spans 523-542; it reads MPVQLNKGLSSKNISSSPSV. A compositionally biased stretch (polar residues) spans 554–564; that stretch reads SPPSSATKKDS. Residues 674–795 form a disordered region; that stretch reads HYCSSGQGQG…GFTIVSPLDI (122 aa). Positions 727–748 are enriched in polar residues; it reads ARGSFSGQAQPLRTLRSTSGKS. Residues 765–776 are compositionally biased toward low complexity; that stretch reads PASASSSNPSSS. The LIR 2 motif lies at 785–789; sequence SGFTI. The tract at residues 786–791 is required for interaction with ATG8 family proteins; that stretch reads GFTIVS. Serine 791 carries the post-translational modification Phosphoserine.

In terms of assembly, interacts with MAP1LC3A, MAP1LC3B, MAP1LC3C, GABARAP, GABARAPL1, GABARAPL2. Interacts with VPS29 and VPS35; indicative for an association with retromer CSC subcomplex. MAP1LC3A and VPS29 compete for binding to TBC1D5. Interacts with AP2M1; indicative for an association with the AP2 complex. Interacts with ULK1 and ATG13 (phosphorylated); indicative for an association with the activated ULK1-ATG13-FIP200 complex. Interacts with ATG9A; the interactions seems to be restricted to the AP2-clathrin-associated fraction of ATG9A.

It is found in the endosome membrane. The protein resides in the cytoplasmic vesicle. It localises to the autophagosome. May act as a GTPase-activating protein (GAP) for Rab family protein(s). May act as a GAP for RAB7A. Can displace RAB7A and retromer CSC subcomplex from the endosomal membrane to the cytosol; at least retromer displacement seems to require its catalytic activity. Required for retrograde transport of cargo proteins from endosomes to the trans-Golgi network (TGN); the function seems to require its catalytic activity. Involved in regulation of autophagy. May act as a molecular switch between endosomal and autophagosomal transport and is involved in reprogramming vesicle trafficking upon autophagy induction. Involved in the trafficking of ATG9A upon activation of autophagy. May regulate the recruitment of ATG9A-AP2-containing vesicles to autophagic membranes. This Homo sapiens (Human) protein is TBC1 domain family member 5 (TBC1D5).